The chain runs to 217 residues: Phosphoribosylformylglycinamidine synthase subunit PurQ (217 aa).

Positions 2 to 217 (SIGVLVFPGS…GRVLLQGLLS (216 aa)) constitute a Glutamine amidotransferase type-1 domain. Cys86 functions as the Nucleophile in the catalytic mechanism. Active-site residues include His194 and Glu196.

Part of the FGAM synthase complex composed of 1 PurL, 1 PurQ and 2 PurS subunits.

The protein localises to the cytoplasm. It carries out the reaction N(2)-formyl-N(1)-(5-phospho-beta-D-ribosyl)glycinamide + L-glutamine + ATP + H2O = 2-formamido-N(1)-(5-O-phospho-beta-D-ribosyl)acetamidine + L-glutamate + ADP + phosphate + H(+). The catalysed reaction is L-glutamine + H2O = L-glutamate + NH4(+). It participates in purine metabolism; IMP biosynthesis via de novo pathway; 5-amino-1-(5-phospho-D-ribosyl)imidazole from N(2)-formyl-N(1)-(5-phospho-D-ribosyl)glycinamide: step 1/2. Functionally, part of the phosphoribosylformylglycinamidine synthase complex involved in the purines biosynthetic pathway. Catalyzes the ATP-dependent conversion of formylglycinamide ribonucleotide (FGAR) and glutamine to yield formylglycinamidine ribonucleotide (FGAM) and glutamate. The FGAM synthase complex is composed of three subunits. PurQ produces an ammonia molecule by converting glutamine to glutamate. PurL transfers the ammonia molecule to FGAR to form FGAM in an ATP-dependent manner. PurS interacts with PurQ and PurL and is thought to assist in the transfer of the ammonia molecule from PurQ to PurL. This chain is Phosphoribosylformylglycinamidine synthase subunit PurQ, found in Parasynechococcus marenigrum (strain WH8102).